The sequence spans 400 residues: Spermatogenic leucine zipper protein 1 (400 aa).

The interval 1 to 27 (MADSDSSSEMPAHSPSPSPIPCAKQKP) is disordered. Phosphoserine is present on Ser-106. The segment at 116-127 (RNKLRFKDDLFI) is helix-loop-helix motif. Positions 128 to 193 (HFDPERENTM…HIRGEYRKLR (66 aa)) are basic motif. Coiled-coil stretches lie at residues 182–231 (SVHI…KDIV) and 268–293 (LIAA…LHLH). Ser-207 is subject to Phosphoserine. Positions 252–273 (LEEQVKKLSQDTHSLHLIAALL) are leucine-zipper. Residues 295–332 (AGPGHEKPLQTSGEQDKKCGEQDKKCGEQDKKCGEQDK) form a disordered region.

Interacts with PPP1CC isoform gamma-2. Post-translationally, phosphorylated by MAPK1/ERK2 and MAPK3/ERK1.

Its subcellular location is the cytoplasm. The protein localises to the nucleus. Functionally, transcription factor that binds to the DNA sequence 5'-CANNTG-3'(E box) and the G-box motif. May play an important role in the regulation of cell proliferation and differentiation during spermatogenesis. The polypeptide is Spermatogenic leucine zipper protein 1 (Spz1) (Rattus norvegicus (Rat)).